The primary structure comprises 322 residues: Basic 30 kDa endochitinase (322 aa).

Positions 1–22 are cleaved as a signal peptide; sequence MRLSEFTTLFLLFSVLLLSASA. The 42-residue stretch at 23-64 folds into the Chitin-binding type-1 domain; it reads EQCGSQAGGALCASGLCCSKFGWCGNTNEYCGPGNCQSQCPG. 4 disulfide bridges follow: C25-C40, C34-C46, C39-C53, and C58-C62. 4-hydroxyproline occurs at positions 66 and 68. 3 disulfides stabilise this stretch: C93–C156, C168–C176, and C275–C307. E138 serves as the catalytic Proton donor. Residues 316 to 322 constitute a propeptide, removed in mature form; the sequence is GLLVDIM.

This sequence belongs to the glycosyl hydrolase 19 family. Chitinase class I subfamily. In terms of processing, the 4-hydroxyproline residues are not glycosylated in this plant vacuolar protein.

The protein localises to the vacuole. It localises to the secreted. It is found in the cell wall. The enzyme catalyses Random endo-hydrolysis of N-acetyl-beta-D-glucosaminide (1-&gt;4)-beta-linkages in chitin and chitodextrins.. Functionally, defense against chitin-containing fungal pathogens. The sequence is that of Basic 30 kDa endochitinase (CHI9) from Solanum lycopersicum (Tomato).